We begin with the raw amino-acid sequence, 233 residues long: 2-C-methyl-D-erythritol 4-phosphate cytidylyltransferase (233 aa).

This sequence belongs to the IspD/TarI cytidylyltransferase family. IspD subfamily.

The enzyme catalyses 2-C-methyl-D-erythritol 4-phosphate + CTP + H(+) = 4-CDP-2-C-methyl-D-erythritol + diphosphate. It functions in the pathway isoprenoid biosynthesis; isopentenyl diphosphate biosynthesis via DXP pathway; isopentenyl diphosphate from 1-deoxy-D-xylulose 5-phosphate: step 2/6. In terms of biological role, catalyzes the formation of 4-diphosphocytidyl-2-C-methyl-D-erythritol from CTP and 2-C-methyl-D-erythritol 4-phosphate (MEP). The protein is 2-C-methyl-D-erythritol 4-phosphate cytidylyltransferase of Gloeobacter violaceus (strain ATCC 29082 / PCC 7421).